A 218-amino-acid polypeptide reads, in one-letter code: Glutathione S-transferase Mu 3 (218 aa).

One can recognise a GST N-terminal domain in the interval 2-88 (PMTLGYWNTR…YLGRKHNLCG (87 aa)). Glutathione-binding positions include 7–8 (YW), 46–50 (WLSEK), and 59–60 (NL). A Glycyl lysine isopeptide (Lys-Gly) (interchain with G-Cter in SUMO2) cross-link involves residue lysine 50. Lysine 69 participates in a covalent cross-link: Glycyl lysine isopeptide (Lys-Gly) (interchain with G-Cter in SUMO2). 72-73 (QS) contributes to the glutathione binding site. One can recognise a GST C-terminal domain in the interval 90-208 (TEEERIRVDT…KSSRFLPRPV (119 aa)).

It belongs to the GST superfamily. Mu family. In terms of assembly, homodimer.

The protein resides in the cytoplasm. It carries out the reaction RX + glutathione = an S-substituted glutathione + a halide anion + H(+). Its function is as follows. Conjugation of reduced glutathione to a wide number of exogenous and endogenous hydrophobic electrophiles. The polypeptide is Glutathione S-transferase Mu 3 (Gstm3) (Mus musculus (Mouse)).